A 113-amino-acid chain; its full sequence is Phosphoribosyl-ATP pyrophosphatase (113 aa).

Belongs to the PRA-PH family.

The protein localises to the cytoplasm. The enzyme catalyses 1-(5-phospho-beta-D-ribosyl)-ATP + H2O = 1-(5-phospho-beta-D-ribosyl)-5'-AMP + diphosphate + H(+). Its pathway is amino-acid biosynthesis; L-histidine biosynthesis; L-histidine from 5-phospho-alpha-D-ribose 1-diphosphate: step 2/9. In Janthinobacterium sp. (strain Marseille) (Minibacterium massiliensis), this protein is Phosphoribosyl-ATP pyrophosphatase.